The primary structure comprises 127 residues: Apolipoprotein C-IV (127 aa).

The signal sequence occupies residues 1–27; the sequence is MSLLRNRLQDLPALCLCVLVLACIGAC.

It belongs to the apolipoprotein C4 family.

It is found in the secreted. May participate in lipoprotein metabolism. The polypeptide is Apolipoprotein C-IV (APOC4) (Papio hamadryas (Hamadryas baboon)).